The primary structure comprises 352 residues: Photosystem II D2 protein (352 aa).

T2 carries the N-acetylthreonine modification. T2 is modified (phosphothreonine). A helical membrane pass occupies residues 40–60 (CAYFALGGWLTGTTFVTSWYT). A chlorophyll a-binding site is contributed by H117. The helical transmembrane segment at 124–140 (GFMLRQFEIARSVNLRP) threads the bilayer. Pheophytin a contacts are provided by Q129 and N142. A helical membrane pass occupies residues 152–165 (VFVSVFLIYPLGQS). H197 is a chlorophyll a binding site. The chain crosses the membrane as a helical span at residues 207–227 (AALLCAIHGATVENTLFEDGD). A plastoquinone contacts are provided by H214 and F261. H214 contributes to the Fe cation binding site. H268 serves as a coordination point for Fe cation. The chain crosses the membrane as a helical span at residues 278–294 (GLWMSAIGVVGLALNLR).

This sequence belongs to the reaction center PufL/M/PsbA/D family. PSII is composed of 1 copy each of membrane proteins PsbA, PsbB, PsbC, PsbD, PsbE, PsbF, PsbH, PsbI, PsbJ, PsbK, PsbL, PsbM, PsbT, PsbX, PsbY, PsbZ, Psb30/Ycf12, at least 3 peripheral proteins of the oxygen-evolving complex and a large number of cofactors. It forms dimeric complexes. It depends on The D1/D2 heterodimer binds P680, chlorophylls that are the primary electron donor of PSII, and subsequent electron acceptors. It shares a non-heme iron and each subunit binds pheophytin, quinone, additional chlorophylls, carotenoids and lipids. There is also a Cl(-1) ion associated with D1 and D2, which is required for oxygen evolution. The PSII complex binds additional chlorophylls, carotenoids and specific lipids. as a cofactor. Phosphorylated in vitro.

The protein localises to the plastid. It is found in the chloroplast thylakoid membrane. It carries out the reaction 2 a plastoquinone + 4 hnu + 2 H2O = 2 a plastoquinol + O2. In terms of biological role, photosystem II (PSII) is a light-driven water:plastoquinone oxidoreductase that uses light energy to abstract electrons from H(2)O, generating O(2) and a proton gradient subsequently used for ATP formation. It consists of a core antenna complex that captures photons, and an electron transfer chain that converts photonic excitation into a charge separation. The D1/D2 (PsbA/PsbD) reaction center heterodimer binds P680, the primary electron donor of PSII as well as several subsequent electron acceptors. D2 is needed for assembly of a stable PSII complex. In Chlamydomonas reinhardtii (Chlamydomonas smithii), this protein is Photosystem II D2 protein.